We begin with the raw amino-acid sequence, 493 residues long: Glutamate--tRNA ligase (493 aa).

The 'HIGH' region motif lies at 10-20 (PSPTGTPHVGL). Residues 254–258 (KLSKR) carry the 'KMSKS' region motif. Lys257 contacts ATP.

This sequence belongs to the class-I aminoacyl-tRNA synthetase family. Glutamate--tRNA ligase type 1 subfamily. As to quaternary structure, monomer.

Its subcellular location is the cytoplasm. The enzyme catalyses tRNA(Glu) + L-glutamate + ATP = L-glutamyl-tRNA(Glu) + AMP + diphosphate. Catalyzes the attachment of glutamate to tRNA(Glu) in a two-step reaction: glutamate is first activated by ATP to form Glu-AMP and then transferred to the acceptor end of tRNA(Glu). The chain is Glutamate--tRNA ligase from Corynebacterium efficiens (strain DSM 44549 / YS-314 / AJ 12310 / JCM 11189 / NBRC 100395).